We begin with the raw amino-acid sequence, 1390 residues long: DNA-directed RNA polymerase subunit beta (1390 aa).

It belongs to the RNA polymerase beta chain family. In terms of assembly, the RNAP catalytic core consists of 2 alpha, 1 beta, 1 beta' and 1 omega subunit. When a sigma factor is associated with the core the holoenzyme is formed, which can initiate transcription.

The enzyme catalyses RNA(n) + a ribonucleoside 5'-triphosphate = RNA(n+1) + diphosphate. DNA-dependent RNA polymerase catalyzes the transcription of DNA into RNA using the four ribonucleoside triphosphates as substrates. This Mycoplasma genitalium (strain ATCC 33530 / DSM 19775 / NCTC 10195 / G37) (Mycoplasmoides genitalium) protein is DNA-directed RNA polymerase subunit beta.